Consider the following 447-residue polypeptide: Phosphoglucosamine mutase (447 aa).

Catalysis depends on Ser-102, which acts as the Phosphoserine intermediate. Mg(2+) is bound by residues Ser-102, Asp-241, Asp-243, and Asp-245. A Phosphoserine modification is found at Ser-102.

The protein belongs to the phosphohexose mutase family. It depends on Mg(2+) as a cofactor. In terms of processing, activated by phosphorylation.

The catalysed reaction is alpha-D-glucosamine 1-phosphate = D-glucosamine 6-phosphate. Catalyzes the conversion of glucosamine-6-phosphate to glucosamine-1-phosphate. The sequence is that of Phosphoglucosamine mutase from Symbiobacterium thermophilum (strain DSM 24528 / JCM 14929 / IAM 14863 / T).